A 469-amino-acid polypeptide reads, in one-letter code: Phenylalanine--tRNA ligase alpha subunit (469 aa).

Residues T309, 348–350 (QLD), and F388 each bind L-phenylalanine. E390 is a binding site for Mg(2+).

It belongs to the class-II aminoacyl-tRNA synthetase family. Phe-tRNA synthetase alpha subunit type 2 subfamily. In terms of assembly, tetramer of two alpha and two beta subunits. Mg(2+) serves as cofactor.

The protein localises to the cytoplasm. The enzyme catalyses tRNA(Phe) + L-phenylalanine + ATP = L-phenylalanyl-tRNA(Phe) + AMP + diphosphate + H(+). The sequence is that of Phenylalanine--tRNA ligase alpha subunit from Sulfurisphaera tokodaii (strain DSM 16993 / JCM 10545 / NBRC 100140 / 7) (Sulfolobus tokodaii).